The chain runs to 363 residues: Protein-arginine kinase (363 aa).

The 232-residue stretch at 24-255 (IVLSSRIRLA…QQLIAQERAA (232 aa)) folds into the Phosphagen kinase C-terminal domain. Residues 27–31 (SSRIR), H92, R126, 177–181 (RASVM), and 208–213 (RGTYGE) contribute to the ATP site. An RDXXRA motif of the pArg binding pocket involved in allosteric regulation motif is present at residues 338-343 (RDVRRA).

The protein belongs to the ATP:guanido phosphotransferase family.

It catalyses the reaction L-arginyl-[protein] + ATP = N(omega)-phospho-L-arginyl-[protein] + ADP + H(+). Appears to be allosterically activated by the binding of pArg-containing polypeptides to the pArg-binding pocket localized in the C-terminal domain of McsB. Catalyzes the specific phosphorylation of arginine residues in a large number of proteins. Is part of the bacterial stress response system. Protein arginine phosphorylation has a physiologically important role and is involved in the regulation of many critical cellular processes, such as protein homeostasis, motility, competence, and stringent and stress responses, by regulating gene expression and protein activity. The polypeptide is Protein-arginine kinase (Geobacillus kaustophilus (strain HTA426)).